The following is a 156-amino-acid chain: Small ribosomal subunit protein uS7 (156 aa).

It belongs to the universal ribosomal protein uS7 family. Part of the 30S ribosomal subunit. Contacts proteins S9 and S11.

Functionally, one of the primary rRNA binding proteins, it binds directly to 16S rRNA where it nucleates assembly of the head domain of the 30S subunit. Is located at the subunit interface close to the decoding center, probably blocks exit of the E-site tRNA. In Levilactobacillus brevis (strain ATCC 367 / BCRC 12310 / CIP 105137 / JCM 1170 / LMG 11437 / NCIMB 947 / NCTC 947) (Lactobacillus brevis), this protein is Small ribosomal subunit protein uS7.